Here is a 300-residue protein sequence, read N- to C-terminus: Acetyl-coenzyme A carboxylase carboxyl transferase subunit beta (300 aa).

Positions 24–293 (LWTNCESCSQ…NAPGAALGGA (270 aa)) constitute a CoA carboxyltransferase N-terminal domain. Zn(2+) contacts are provided by C28, C31, C47, and C50. The C4-type zinc finger occupies 28-50 (CESCSQMILVKDLQKAMNVCPHC).

This sequence belongs to the AccD/PCCB family. Acetyl-CoA carboxylase is a heterohexamer composed of biotin carboxyl carrier protein (AccB), biotin carboxylase (AccC) and two subunits each of ACCase subunit alpha (AccA) and ACCase subunit beta (AccD). The cofactor is Zn(2+).

The protein resides in the cytoplasm. It catalyses the reaction N(6)-carboxybiotinyl-L-lysyl-[protein] + acetyl-CoA = N(6)-biotinyl-L-lysyl-[protein] + malonyl-CoA. Its pathway is lipid metabolism; malonyl-CoA biosynthesis; malonyl-CoA from acetyl-CoA: step 1/1. Functionally, component of the acetyl coenzyme A carboxylase (ACC) complex. Biotin carboxylase (BC) catalyzes the carboxylation of biotin on its carrier protein (BCCP) and then the CO(2) group is transferred by the transcarboxylase to acetyl-CoA to form malonyl-CoA. The chain is Acetyl-coenzyme A carboxylase carboxyl transferase subunit beta from Gluconacetobacter diazotrophicus (strain ATCC 49037 / DSM 5601 / CCUG 37298 / CIP 103539 / LMG 7603 / PAl5).